Reading from the N-terminus, the 1027-residue chain is INO80 complex subunit D (1027 aa).

K87 participates in a covalent cross-link: Glycyl lysine isopeptide (Lys-Gly) (interchain with G-Cter in SUMO2). S132 carries the post-translational modification Phosphoserine. 5 disordered regions span residues H193–P278, R519–P574, R813–S850, L914–K969, and Q982–N1027. The segment covering S201 to S216 has biased composition (low complexity). Residues V229–Q257 show a composition bias toward polar residues. Residues K525 to Q559 show a composition bias toward basic residues. Over residues L914–P932 the composition is skewed to low complexity. The span at V937–S954 shows a compositional bias: polar residues. The span at A1001–N1027 shows a compositional bias: low complexity.

This sequence belongs to the INO80D family. Component of the chromatin remodeling INO80 complex; specifically part of a complex module associated with the N-terminus of INO80.

It is found in the nucleus. In terms of biological role, putative regulatory component of the chromatin remodeling INO80 complex which is involved in transcriptional regulation, DNA replication and probably DNA repair. The protein is INO80 complex subunit D of Homo sapiens (Human).